The sequence spans 244 residues: NAD-dependent protein deacetylase (244 aa).

The 244-residue stretch at 1–244 (MSATERQLQY…IGDTCRQLRA (244 aa)) folds into the Deacetylase sirtuin-type domain. Ala-27, Thr-31, Phe-38, Arg-39, Gln-107, Ile-109, Asp-110, and His-125 together coordinate NAD(+). Phe-38 is a binding site for nicotinamide. The nicotinamide site is built by Ile-109 and Asp-110. His-125 serves as the catalytic Proton acceptor. Positions 133, 136, 153, and 156 each coordinate Zn(2+). Residues Ser-192, Ser-193, Asn-217, and Ile-235 each contribute to the NAD(+) site.

Belongs to the sirtuin family. Class U subfamily. Requires Zn(2+) as cofactor.

Its subcellular location is the cytoplasm. The catalysed reaction is N(6)-acetyl-L-lysyl-[protein] + NAD(+) + H2O = 2''-O-acetyl-ADP-D-ribose + nicotinamide + L-lysyl-[protein]. NAD-dependent protein deacetylase which modulates the activities of several enzymes which are inactive in their acetylated form. This is NAD-dependent protein deacetylase from Chromobacterium violaceum (strain ATCC 12472 / DSM 30191 / JCM 1249 / CCUG 213 / NBRC 12614 / NCIMB 9131 / NCTC 9757 / MK).